The primary structure comprises 499 residues: ATP synthase subunit beta, chloroplastic (499 aa).

170 to 177 (GGAGVGKT) lines the ATP pocket.

Belongs to the ATPase alpha/beta chains family. As to quaternary structure, F-type ATPases have 2 components, CF(1) - the catalytic core - and CF(0) - the membrane proton channel. CF(1) has five subunits: alpha(3), beta(3), gamma(1), delta(1), epsilon(1). CF(0) has four main subunits: a(1), b(1), b'(1) and c(9-12).

It is found in the plastid. Its subcellular location is the chloroplast thylakoid membrane. It catalyses the reaction ATP + H2O + 4 H(+)(in) = ADP + phosphate + 5 H(+)(out). Its function is as follows. Produces ATP from ADP in the presence of a proton gradient across the membrane. The catalytic sites are hosted primarily by the beta subunits. The polypeptide is ATP synthase subunit beta, chloroplastic (Ipomoea purpurea (Common morning glory)).